The following is a 133-amino-acid chain: MDECVVDAAAVVDALAGKGASAIVLRGLLKESISNAPHLLDAEVGHALRRAVLSDEISEEQARAALDALPYLIDNRYPHSPRLIEYTWQLRHNVTFYDALYVALATALDVPLLTGDSRLAAAPGLPCEIKLVR.

Mg(2+)-binding residues include Asp7 and Asp98.

The protein belongs to the PINc/VapC protein family. Mg(2+) is required as a cofactor.

Toxic component of a type II toxin-antitoxin (TA) system. The cognate antitoxin is VapB1. The chain is Ribonuclease VapC1 from Mycobacterium tuberculosis (strain CDC 1551 / Oshkosh).